The sequence spans 459 residues: Eukaryotic translation initiation factor 3 subunit M (459 aa).

Residues 207–384 (LDWAQTHVVD…SEFLVHRATY (178 aa)) form the PCI domain. A disordered region spans residues 431 to 459 (AAAEGEKGDKNNKGPSERRRAPQEIAAAE). The span at 434-452 (EGEKGDKNNKGPSERRRAP) shows a compositional bias: basic and acidic residues.

The protein belongs to the eIF-3 subunit M family. Component of the eukaryotic translation initiation factor 3 (eIF-3) complex.

It localises to the cytoplasm. Functionally, component of the eukaryotic translation initiation factor 3 (eIF-3) complex, which is involved in protein synthesis of a specialized repertoire of mRNAs and, together with other initiation factors, stimulates binding of mRNA and methionyl-tRNAi to the 40S ribosome. The eIF-3 complex specifically targets and initiates translation of a subset of mRNAs involved in cell proliferation. The sequence is that of Eukaryotic translation initiation factor 3 subunit M from Emericella nidulans (strain FGSC A4 / ATCC 38163 / CBS 112.46 / NRRL 194 / M139) (Aspergillus nidulans).